We begin with the raw amino-acid sequence, 246 residues long: 3-oxoacyl-[acyl-carrier-protein] reductase FabG (246 aa).

Residues 11–14, 62–63, and asparagine 89 contribute to the NADP(+) site; these read GASR and NV. Serine 141 is a binding site for substrate. The Proton acceptor role is filled by tyrosine 154. NADP(+) is bound by residues 154 to 158 and isoleucine 187; that span reads YVATK.

The protein belongs to the short-chain dehydrogenases/reductases (SDR) family. As to quaternary structure, homotetramer.

The catalysed reaction is a (3R)-hydroxyacyl-[ACP] + NADP(+) = a 3-oxoacyl-[ACP] + NADPH + H(+). Its pathway is lipid metabolism; fatty acid biosynthesis. Catalyzes the NADPH-dependent reduction of beta-ketoacyl-ACP substrates to beta-hydroxyacyl-ACP products, the first reductive step in the elongation cycle of fatty acid biosynthesis. The polypeptide is 3-oxoacyl-[acyl-carrier-protein] reductase FabG (fabG) (Staphylococcus aureus (strain Mu50 / ATCC 700699)).